Consider the following 255-residue polypeptide: Acetylglutamate kinase (255 aa).

Substrate-binding positions include 40 to 41, Arg-62, and Asn-153; that span reads GG.

Belongs to the acetylglutamate kinase family. ArgB subfamily.

The protein localises to the cytoplasm. It carries out the reaction N-acetyl-L-glutamate + ATP = N-acetyl-L-glutamyl 5-phosphate + ADP. The protein operates within amino-acid biosynthesis; L-arginine biosynthesis; N(2)-acetyl-L-ornithine from L-glutamate: step 2/4. Catalyzes the ATP-dependent phosphorylation of N-acetyl-L-glutamate. This is Acetylglutamate kinase from Bacillus anthracis (strain CDC 684 / NRRL 3495).